The following is a 321-amino-acid chain: NADPH-dependent codeinone reductase 1-4 (321 aa).

2 residues coordinate NADPH: Thr-27 and Asp-51. Residues Tyr-56 and His-119 each act as proton donor in the active site. His-119 is a substrate binding site. Residues Ser-165, Gln-187, Ser-214, Leu-216, Ser-264, and Arg-269 each coordinate NADPH. A disordered region spans residues 299-321 (SADFLLSPTGPFKTEEEFWDEKD).

It belongs to the aldo/keto reductase family. In terms of tissue distribution, latex secreting cells (laticifer cells). Expressed constitutively in all organs with highest levels in capsules. Restricted to the parietal region of sieve elements adjacent or proximal to laticifers in roots, stems, leaves and carpels.

The protein resides in the cytoplasm. Its subcellular location is the cytosol. The catalysed reaction is codeine + NADP(+) = codeinone + NADPH + H(+). The enzyme catalyses neopine + NADP(+) = neopinone + NADPH + H(+). It carries out the reaction morphine + NADP(+) = morphinone + NADPH + H(+). It catalyses the reaction neomorphine + NADP(+) = neomorphinone + NADPH + H(+). The protein operates within alkaloid biosynthesis; morphine biosynthesis. NADPH-dependent codeinone reductase involved in biosynthesis of morphinan-type benzylisoquinoline and opiate alkaloids natural products. Reduces codeinone to codeine in the penultimate step in morphine biosynthesis. Can use morphinone, hydrocodone and hydromorphone as substrate during reductive reaction with NADPH as cofactor, and morphine and dihydrocodeine as substrate during oxidative reaction with NADP as cofactor. Converts morphinone to morphine, and neomorphinone to neomorphine. Reduces irreversibly neopinone, a spontaneous isomer of codeinone, to neopine; in planta, neopine levels are limited to low levels. This chain is NADPH-dependent codeinone reductase 1-4, found in Papaver somniferum (Opium poppy).